The sequence spans 465 residues: Putative F-box protein At1g21990 (465 aa).

An F-box domain is found at 8-54 (RDLISGSPDEILGKILSFLPTHHAATTSVLSKRWRNLLPLVDKLELT).

This chain is Putative F-box protein At1g21990, found in Arabidopsis thaliana (Mouse-ear cress).